The primary structure comprises 268 residues: E3 ubiquitin-protein ligase IAP-3 (268 aa).

2 BIR repeats span residues 18 to 84 (KAAR…CPFV) and 111 to 178 (EAAR…CEYV). Residues C148, C151, H168, and C175 each contribute to the Zn(2+) site. Residues 221 to 256 (CKICLGAEKTVCFVPCGHVVACGKCAAGVTTCPVCR) form an RING-type zinc finger.

The protein belongs to the IAP family. Auto-ubiquitinated.

The catalysed reaction is S-ubiquitinyl-[E2 ubiquitin-conjugating enzyme]-L-cysteine + [acceptor protein]-L-lysine = [E2 ubiquitin-conjugating enzyme]-L-cysteine + N(6)-ubiquitinyl-[acceptor protein]-L-lysine.. Functionally, RING-finger E3 ubiquitin ligase required to prevent cellular apoptosis in infected cells. Ubiquitinates and subsequently targets host pro-apoptotic cellular proteins such as HID for degradation by the proteasome. This Orgyia pseudotsugata multicapsid polyhedrosis virus (OpMNPV) protein is E3 ubiquitin-protein ligase IAP-3 (IAP3).